A 382-amino-acid chain; its full sequence is Lipid-A-disaccharide synthase (382 aa).

Belongs to the LpxB family.

The catalysed reaction is 2-N,3-O-bis[(3R)-3-hydroxytetradecanoyl]-alpha-D-glucosaminyl 1-phosphate + UDP-2-N,3-O-bis[(3R)-3-hydroxytetradecanoyl]-alpha-D-glucosamine = lipid A disaccharide (E. coli) + UDP + H(+). It carries out the reaction a lipid X + a UDP-2-N,3-O-bis[(3R)-3-hydroxyacyl]-alpha-D-glucosamine = a lipid A disaccharide + UDP + H(+). The protein operates within glycolipid biosynthesis; lipid IV(A) biosynthesis; lipid IV(A) from (3R)-3-hydroxytetradecanoyl-[acyl-carrier-protein] and UDP-N-acetyl-alpha-D-glucosamine: step 5/6. Condensation of UDP-2,3-diacylglucosamine and 2,3-diacylglucosamine-1-phosphate to form lipid A disaccharide, a precursor of lipid A, a phosphorylated glycolipid that anchors the lipopolysaccharide to the outer membrane of the cell. The polypeptide is Lipid-A-disaccharide synthase (Escherichia coli O157:H7).